Here is a 281-residue protein sequence, read N- to C-terminus: Endochitinase At2g43610 (281 aa).

Residues 1-28 (MATQNAILKKALIIFLFTLTIMTGTAFS) form the signal peptide. Residues 29-66 (QNCGTNGCKGNMCCSRWGYCGTTKAYCGTGCQSGPCNS) form the Chitin-binding type-1 domain. Cystine bridges form between Cys31-Cys42, Cys36-Cys48, Cys41-Cys55, and Cys59-Cys64. The interval 86-281 (GTIASVITPA…GVTPGTNLSC (196 aa)) is catalytic. The active-site Proton donor is Glu148. Asn278 carries an N-linked (GlcNAc...) asparagine glycan.

Belongs to the glycosyl hydrolase 19 family. Chitinase class I subfamily.

The catalysed reaction is Random endo-hydrolysis of N-acetyl-beta-D-glucosaminide (1-&gt;4)-beta-linkages in chitin and chitodextrins.. This is Endochitinase At2g43610 from Arabidopsis thaliana (Mouse-ear cress).